The chain runs to 399 residues: MNELEFHPHADRRTGSHTMEYQHLGVVPVVSAQANSTPLGGCTLSDGVIRAMGDAARFHVDMEQLWQAAGSFLAEATGSEDACPVTGAAAGMAIAVAACVAGTDGLRVQRLPDPGDQPNEIVLQKGHSISYGGAPLAQMIALGGGRAVEVGAVNETPRSHVASAVTRRTAALVYVTSRTHAVHRKGVPLDELVAIGREHGVPVIVDAAGEGGLRRWVASGADLVIYSGPKMLGAPTSGFICGRGDLVAACRAQYSGIARPMKVGKENLLGLLQAVREYTAVPEEQRAAEQLERMTKLAARLDKIPGLSARTAQDDSGRTIYRVLLTVDPAAAGRSAATLAEEMRAGIPSIYLRDFKLHLGQLEVDPRALSPDGEESVVRRLEELLLDHGGAPTGMEDAR.

Thr-179 serves as a coordination point for phosphate. Lys-230 is modified (N6-(pyridoxal phosphate)lysine). 4 residues coordinate phosphate: Arg-318, Arg-322, Arg-353, and Arg-367.

This sequence belongs to the SelA family. As to quaternary structure, homooctamer; tetramer of homodimers. The cofactor is pyridoxal 5'-phosphate.

The enzyme catalyses (5'S,6'R)-C-glycyluridine + O2 = uridine-5'-carboxamide + CO2 + H2O. It participates in antibiotic biosynthesis. With respect to regulation, activity is dependent on phosphate. Monooxygenase-decarboxylase involved in the biosynthesis of the capuramycin-type nucleoside antibiotic A-503083. Catalyzes the oxidative decarboxylation of 5'-C-glycyluridine (GlyU) to uridine-5'-carboxamide (CarU). Is stereospecific for the (5'S,6'R)-diastereomer of GlyU. Directly incorporates a single oxygen atom from O(2) into the product CarU. In Streptomyces sp, this protein is 5'-C-glycyluridine monooxygenase-decarboxylase.